Reading from the N-terminus, the 58-residue chain is uncharacterized protein (58 aa).

Residues 3–52 are a coiled coil; sequence KVILEHLQRIEKQLEILNSKIENFLGFEELSEEELKELDEIEAKMEKGEK.

This is an uncharacterized protein from Archaeoglobus fulgidus (strain ATCC 49558 / DSM 4304 / JCM 9628 / NBRC 100126 / VC-16).